The primary structure comprises 745 residues: Double-stranded RNA-specific editase B2 (745 aa).

Disordered stretches follow at residues 1-35 and 50-104; these read MASV…RKDK and SPGT…PLEE. Positions 20–34 are enriched in basic residues; that stretch reads CKSKRRRRRRSKRKD. The segment at 23 to 35 is R-domain (ssRNA-binding); that stretch reads KRRRRRRSKRKDK. DRBM domains lie at 125 to 191 and 283 to 347; these read TPKN…SFVQ and NPVV…ALFD. Residues 414–741 form the A to I editase domain; that stretch reads VLSSGTKCIS…VRKPPEQDQF (328 aa). A Zn(2+)-binding site is contributed by histidine 438. Glutamate 440 acts as the Proton donor in catalysis. Residues cysteine 496 and cysteine 561 each contribute to the Zn(2+) site.

In terms of tissue distribution, brain specific.

It localises to the nucleus. Lacks editing activity. It prevents the binding of other ADAR enzymes to targets in vitro, and decreases the efficiency of these enzymes. Capable of binding to dsRNA but also to ssRNA. This chain is Double-stranded RNA-specific editase B2 (Adarb2), found in Mus musculus (Mouse).